The following is a 140-amino-acid chain: Nucleoside diphosphate kinase (140 aa).

Positions 11, 59, 87, 93, 104, and 114 each coordinate ATP. The active-site Pros-phosphohistidine intermediate is the H117.

It belongs to the NDK family. In terms of assembly, homotetramer. Requires Mg(2+) as cofactor.

Its subcellular location is the cytoplasm. The enzyme catalyses a 2'-deoxyribonucleoside 5'-diphosphate + ATP = a 2'-deoxyribonucleoside 5'-triphosphate + ADP. The catalysed reaction is a ribonucleoside 5'-diphosphate + ATP = a ribonucleoside 5'-triphosphate + ADP. In terms of biological role, major role in the synthesis of nucleoside triphosphates other than ATP. The ATP gamma phosphate is transferred to the NDP beta phosphate via a ping-pong mechanism, using a phosphorylated active-site intermediate. This chain is Nucleoside diphosphate kinase, found in Methylocella silvestris (strain DSM 15510 / CIP 108128 / LMG 27833 / NCIMB 13906 / BL2).